The sequence spans 295 residues: Nitrogenase iron protein 1 (295 aa).

ATP is bound at residue 13-20 (GKGGIGKS). Cys101 lines the [4Fe-4S] cluster pocket. Arg104 is subject to ADP-ribosylarginine; by dinitrogenase reductase ADP-ribosyltransferase. Cys135 contributes to the [4Fe-4S] cluster binding site.

This sequence belongs to the NifH/BchL/ChlL family. As to quaternary structure, homodimer. The cofactor is [4Fe-4S] cluster. Post-translationally, the reversible ADP-ribosylation of Arg-104 inactivates the nitrogenase reductase and regulates nitrogenase activity.

It carries out the reaction N2 + 8 reduced [2Fe-2S]-[ferredoxin] + 16 ATP + 16 H2O = H2 + 8 oxidized [2Fe-2S]-[ferredoxin] + 2 NH4(+) + 16 ADP + 16 phosphate + 6 H(+). The key enzymatic reactions in nitrogen fixation are catalyzed by the nitrogenase complex, which has 2 components: the iron protein and the molybdenum-iron protein. This is Nitrogenase iron protein 1 (nifH1) from Nostoc sp. (strain PCC 7120 / SAG 25.82 / UTEX 2576).